The following is a 65-amino-acid chain: Stress-associated endoplasmic reticulum protein 2 (65 aa).

A helical transmembrane segment spans residues 38–58; that stretch reads GPWLLALFVFVVCGSAIFQII.

The protein belongs to the RAMP4 family. Interacts with SEC61B, SEC61A1 and the SEC61 complex. Interacts with CANX.

It is found in the membrane. It localises to the endoplasmic reticulum membrane. In terms of biological role, interacts with target proteins during their translocation into the lumen of the endoplasmic reticulum. Protects unfolded target proteins against degradation during ER stress. May facilitate glycosylation of target proteins after termination of ER stress. May modulate the use of N-glycosylation sites on target proteins. The protein is Stress-associated endoplasmic reticulum protein 2 (SERP2) of Bos taurus (Bovine).